The sequence spans 274 residues: Large ribosomal subunit protein uL2cz/uL2cy (274 aa).

The disordered stretch occupies residues 224-252; sequence NPVDHPHGGGEGRAPIGRKKPVTPWGYPA.

Belongs to the universal ribosomal protein uL2 family. Part of the 50S ribosomal subunit.

It localises to the plastid. The protein resides in the chloroplast. The chain is Large ribosomal subunit protein uL2cz/uL2cy (rpl2-A) from Capsella bursa-pastoris (Shepherd's purse).